The following is a 339-amino-acid chain: Putative clathrin assembly protein At1g14686 (339 aa).

The ENTH domain maps to 16 to 148; sequence SLIAADDILT…ILFHDGNRHR (133 aa). Positions 283-307 are disordered; the sequence is ESSEESAERTEIAEEEEEEEEEIET. Residues 295–305 are compositionally biased toward acidic residues; it reads AEEEEEEEEEI.

The protein localises to the membrane. Its subcellular location is the clathrin-coated pit. The protein resides in the golgi apparatus. It is found in the cytoplasmic vesicle. It localises to the clathrin-coated vesicle. The chain is Putative clathrin assembly protein At1g14686 from Arabidopsis thaliana (Mouse-ear cress).